The primary structure comprises 122 residues: uncharacterized protein (122 aa).

Positions 79-114 (VIEDVASAIKEMMESAAKDLDKIEEVIKESLEKYLR) form a coiled coil.

This is an uncharacterized protein from Archaeoglobus fulgidus (strain ATCC 49558 / DSM 4304 / JCM 9628 / NBRC 100126 / VC-16).